Reading from the N-terminus, the 338-residue chain is Large ribosomal subunit protein uL10 (338 aa).

The disordered stretch occupies residues 297 to 338 (PSAQQTQTQQSTAEEKKEEKKEEEKKGPSEEEIGSGLASLFG). Over residues 298–308 (SAQQTQTQQST) the composition is skewed to low complexity. Basic and acidic residues predominate over residues 309–325 (AEEKKEEKKEEEKKGPS).

It belongs to the universal ribosomal protein uL10 family. In terms of assembly, part of the 50S ribosomal subunit. Forms part of the ribosomal stalk which helps the ribosome interact with GTP-bound translation factors. Forms a heptameric L10(L12)2(L12)2(L12)2 complex, where L10 forms an elongated spine to which the L12 dimers bind in a sequential fashion.

Its function is as follows. Forms part of the ribosomal stalk, playing a central role in the interaction of the ribosome with GTP-bound translation factors. The sequence is that of Large ribosomal subunit protein uL10 from Saccharolobus islandicus (strain Y.N.15.51 / Yellowstone #2) (Sulfolobus islandicus).